The sequence spans 383 residues: Protein RecA (383 aa).

ATP is bound at residue 79–86 (GPESSGKT). Residues 347–369 (IEEDNTEEKQSSKEKETDEKADK) form a disordered region. Over residues 353–369 (EEKQSSKEKETDEKADK) the composition is skewed to basic and acidic residues.

Belongs to the RecA family.

It localises to the cytoplasm. Functionally, can catalyze the hydrolysis of ATP in the presence of single-stranded DNA, the ATP-dependent uptake of single-stranded DNA by duplex DNA, and the ATP-dependent hybridization of homologous single-stranded DNAs. It interacts with LexA causing its activation and leading to its autocatalytic cleavage. The sequence is that of Protein RecA from Streptococcus mutans serotype c (strain ATCC 700610 / UA159).